The following is a 209-amino-acid chain: Small ribosomal subunit protein uS4 (209 aa).

The disordered stretch occupies residues Arg-22–Ser-45. The region spanning Cys-93 to Glu-154 is the S4 RNA-binding domain.

The protein belongs to the universal ribosomal protein uS4 family. Part of the 30S ribosomal subunit. Contacts protein S5. The interaction surface between S4 and S5 is involved in control of translational fidelity.

Functionally, one of the primary rRNA binding proteins, it binds directly to 16S rRNA where it nucleates assembly of the body of the 30S subunit. Its function is as follows. With S5 and S12 plays an important role in translational accuracy. This Chlamydia trachomatis serovar L2 (strain ATCC VR-902B / DSM 19102 / 434/Bu) protein is Small ribosomal subunit protein uS4.